We begin with the raw amino-acid sequence, 65 residues long: Large ribosomal subunit protein uL29 (65 aa).

It belongs to the universal ribosomal protein uL29 family.

In Xylella fastidiosa (strain Temecula1 / ATCC 700964), this protein is Large ribosomal subunit protein uL29.